Reading from the N-terminus, the 463-residue chain is Kynurenine 3-monooxygenase (463 aa).

Belongs to the aromatic-ring hydroxylase family. KMO subfamily. FAD is required as a cofactor.

The protein resides in the mitochondrion outer membrane. The catalysed reaction is L-kynurenine + NADPH + O2 + H(+) = 3-hydroxy-L-kynurenine + NADP(+) + H2O. It participates in cofactor biosynthesis; NAD(+) biosynthesis; quinolinate from L-kynurenine: step 1/3. Functionally, catalyzes the hydroxylation of L-kynurenine (L-Kyn) to form 3-hydroxy-L-kynurenine (L-3OHKyn). Required for synthesis of quinolinic acid. This is Kynurenine 3-monooxygenase from Yarrowia lipolytica (strain CLIB 122 / E 150) (Yeast).